Reading from the N-terminus, the 402-residue chain is CinA-like protein (402 aa).

Belongs to the CinA family.

The protein is CinA-like protein of Fusobacterium nucleatum subsp. nucleatum (strain ATCC 25586 / DSM 15643 / BCRC 10681 / CIP 101130 / JCM 8532 / KCTC 2640 / LMG 13131 / VPI 4355).